We begin with the raw amino-acid sequence, 1375 residues long: MAQANSRSRNSATISYPEKRRARVNLGKREVEILKTPYLLETQIESYRKFLQKDIAAEKREDNGLHAAFKSVFPITSYSGYAVLEYVGYSLGGESTLFDVEECKLRGLTYAAPLKVNMRLVIYDKEAPAGKKAIKDIKEQEVYMGEIPLMTETGSLVINGTERVVVSQLHRSPGVFFEHDKGKTHSSGKLLYSARVIPYRGSWLDFEFDPKDCLFVRIDRRRKLPATVILRALGYDTEQILDMFYKTNHFHLNQETVTLDLIPQRLRGELAVVEIKDKKGKVIVEANRRISARHIRLIEKAEINKLELPDDYLYGKVIGKTIIDKETGEIIAHANEEITAELLKNLRATKTASLDTLYINEIECGLYVSDTLRLDTTTNQLEALVEIYRIMRPGEPPTKEAAESLFENLFFSPERYSLSAVGRMKFNRRVGRKELTGLDVLSKEDIVDVLRVLVDIRDGKGDVDDIDHLGNRRIRSVGEMAENQFRVGLVRVERAVKDRLSLADVENLMPQDLVNAKPVSAAIKEFFGSSQLSQFMDQNNPLSEITHKRRVSALGPGGLTRERAGFEVRDVHVTHYGRVCPIETPEGPNIGLINSLAVFARANEYGFLETPYRKVVDRVVTDETEYLSAIEEGDYYIAQANTNVDEKGRLVDDLISCRYKGEFTLTTPDKINYMDVSPRQIVSVAAALIPFLEHDDANRALMGSNMQRQAVPTIRPETPLVGTGMERTVAVDSGVTVIAKRSGVIDSVDASRIVVRVDRKETEDDDDIGVDIYNLTKFTRSNQNTCINQHPIVEVGDKVQKGDVLADGPSTDIGELALGQNLLVAFMPWNGYNFEDSILISERLVEEDRFTTIHIQEFTCVARDTKLGPEEITSDIPNVGESALAKLDESGIVHIGAEVNAGDILVGKVTPKGETQLTPEEKLLRAIFGEKASDVKDTSLRVTPGITGTVIGVRIFTREGVKKDERTLEIEKAELSKVEKDLNDELRVREDALFENLEKLLTGRVAAGGPNKLAKGTKITKSYLADLPRQKWFEIRLQDDAATKRLEASHEHFKELRETRDAKLKDSRQKLTQGGDLAPGVIKIVKVYLAVKRRIQPGDKMAGRHGNKGVISTIVPIEDMPYLEDGTPVDIVLNPLGVPSRMNIGQVLETHLGWATKGLGKKIGEMIEKGADAKELRKSLKPIYDLSKTQRFDLEALEDPEIVTLAKNLRKGVPISSPVFDGATEEEIKQLLKMADLPTSGQAALYDGRTGKKFDRSVTVGYMYMLKLNHLVDDKMHARSTGSYSLVTQQPLGGKAQFGGQRFGEMEVWALEAYGAAYTLQEMLTVKSDDVAGRTRMYKNIVDGDHRMDAGMPESFNVLVKEIRSLAIDIGLEND.

This sequence belongs to the RNA polymerase beta chain family. As to quaternary structure, the RNAP catalytic core consists of 2 alpha, 1 beta, 1 beta' and 1 omega subunit. When a sigma factor is associated with the core the holoenzyme is formed, which can initiate transcription.

It catalyses the reaction RNA(n) + a ribonucleoside 5'-triphosphate = RNA(n+1) + diphosphate. Its function is as follows. DNA-dependent RNA polymerase catalyzes the transcription of DNA into RNA using the four ribonucleoside triphosphates as substrates. This is DNA-directed RNA polymerase subunit beta from Coxiella burnetii (strain Dugway 5J108-111).